The primary structure comprises 287 residues: Diaminopimelate epimerase (287 aa).

Residues Asn-15 and Asn-66 each coordinate substrate. Catalysis depends on Cys-75, which acts as the Proton donor. Substrate contacts are provided by residues 76-77 (GN), Asn-170, Asn-203, and 221-222 (ER). Cys-230 serves as the catalytic Proton acceptor. A substrate-binding site is contributed by 231 to 232 (GT).

It belongs to the diaminopimelate epimerase family. In terms of assembly, homodimer.

It localises to the cytoplasm. The enzyme catalyses (2S,6S)-2,6-diaminopimelate = meso-2,6-diaminopimelate. It functions in the pathway amino-acid biosynthesis; L-lysine biosynthesis via DAP pathway; DL-2,6-diaminopimelate from LL-2,6-diaminopimelate: step 1/1. Catalyzes the stereoinversion of LL-2,6-diaminopimelate (L,L-DAP) to meso-diaminopimelate (meso-DAP), a precursor of L-lysine and an essential component of the bacterial peptidoglycan. In Desulfovibrio desulfuricans (strain ATCC 27774 / DSM 6949 / MB), this protein is Diaminopimelate epimerase.